Here is a 1055-residue protein sequence, read N- to C-terminus: TNF receptor-associated factor homolog 1a (1055 aa).

The disordered stretch occupies residues 1–56 (MSESTNEDSGAGRSSLEENSNGQRSQSEEAIAEWRSSEQVENGTPSTSPPYWDIDD). The span at 37-46 (SEQVENGTPS) shows a compositional bias: polar residues. The 124-residue stretch at 68 to 191 (FGKNTWTIEK…SGCLTIKAQV (124 aa)) folds into the MATH domain. 4 disordered regions span residues 352 to 380 (PKKEEKSSQNRTKDGNAGEEFSREAVERD), 431 to 590 (AESE…NGSY), 603 to 772 (FSNG…APII), and 820 to 845 (VGSSGFTHPSSQSSGTSTLPPYSHPS). The segment covering 433-446 (SEQKGKRGASEKEK) has biased composition (basic and acidic residues). The stretch at 441–496 (ASEKEKKSKKKQAKQKKNKNKGKEMRKEDKVRTQTEEREIEKEECVRAIAESSAEK) forms a coiled coil. Over residues 447–460 (KSKKKQAKQKKNKN) the composition is skewed to basic residues. Basic and acidic residues predominate over residues 461-486 (KGKEMRKEDKVRTQTEEREIEKEECV). Residues 502-513 (DVSDVSDSVDSS) show a composition bias toward low complexity. Basic and acidic residues predominate over residues 524–537 (RESSPVHWEMDASE). Over residues 569–586 (MDDSSSTCSNDSIQSGVA) the composition is skewed to polar residues. Over residues 657 to 668 (QKPESPKERSPV) the composition is skewed to basic and acidic residues. Polar residues-rich tracts occupy residues 723–740 (KSPSSHHASPSREAQLQT) and 823–845 (SGFTHPSSQSSGTSTLPPYSHPS).

In terms of assembly, interacts with AHK3. Interacts with ATG6, SINAT1, SINAT2, SINAT5 and SINAT6.

The protein resides in the cytoplasm. Functionally, functions redundantly with TRAF1B in the regulation of plant immune response. Contributes to the turnover of the nucleotide-binding domain and leucine-rich repeat-containing (NB-LRR) immune receptors SNC1 and RPS2. May associate with an E3 ubiquitin-protein ligase complex, which modulates ubiquitination and subsequent degradation of NB-LRR immune sensors to maintain their homeostasis. Functions redundantly with TRAF1B in the regulation of autophagosome formation. Required for SINAT1- and SINAT2-mediated ubiquitination and destabilization of ATG6. Functions as a molecular adapter that helps to regulate autophagy by modulating ATG6 stability. This chain is TNF receptor-associated factor homolog 1a, found in Arabidopsis thaliana (Mouse-ear cress).